Here is a 34-residue protein sequence, read N- to C-terminus: MRISAGVLNFLKVDLFKGVRHACAPLVWDAYPLK.

This is an uncharacterized protein from Treponema pallidum (strain Nichols).